The chain runs to 166 residues: Putative esterase sll0410 (166 aa).

The active site involves Asp-45.

The protein belongs to the 4-hydroxybenzoyl-CoA thioesterase family.

The chain is Putative esterase sll0410 from Synechocystis sp. (strain ATCC 27184 / PCC 6803 / Kazusa).